The primary structure comprises 304 residues: Putative AraC-like transcription regulator (304 aa).

Residues 202–300 (ATALTCLHRD…GMPPGDYRKH (99 aa)) form the HTH araC/xylS-type domain. 2 consecutive DNA-binding regions (H-T-H motif) follow at residues 219 to 240 (ADLA…KATV) and 267 to 290 (LASI…KRVL).

The polypeptide is Putative AraC-like transcription regulator (Streptomyces lividans).